Here is a 298-residue protein sequence, read N- to C-terminus: 4-hydroxy-tetrahydrodipicolinate synthase (298 aa).

T51 is a pyruvate binding site. The active-site Proton donor/acceptor is Y139. Residue K167 is the Schiff-base intermediate with substrate of the active site. Pyruvate is bound at residue I209.

Belongs to the DapA family. As to quaternary structure, homotetramer; dimer of dimers.

It is found in the cytoplasm. It carries out the reaction L-aspartate 4-semialdehyde + pyruvate = (2S,4S)-4-hydroxy-2,3,4,5-tetrahydrodipicolinate + H2O + H(+). The protein operates within amino-acid biosynthesis; L-lysine biosynthesis via DAP pathway; (S)-tetrahydrodipicolinate from L-aspartate: step 3/4. In terms of biological role, catalyzes the condensation of (S)-aspartate-beta-semialdehyde [(S)-ASA] and pyruvate to 4-hydroxy-tetrahydrodipicolinate (HTPA). This is 4-hydroxy-tetrahydrodipicolinate synthase from Haemophilus influenzae (strain PittGG).